A 104-amino-acid polypeptide reads, in one-letter code: Large ribosomal subunit protein uL24 (104 aa).

This sequence belongs to the universal ribosomal protein uL24 family. Part of the 50S ribosomal subunit.

In terms of biological role, one of two assembly initiator proteins, it binds directly to the 5'-end of the 23S rRNA, where it nucleates assembly of the 50S subunit. Functionally, one of the proteins that surrounds the polypeptide exit tunnel on the outside of the subunit. The sequence is that of Large ribosomal subunit protein uL24 from Maricaulis maris (strain MCS10) (Caulobacter maris).